A 425-amino-acid polypeptide reads, in one-letter code: MKVLLKNARVIKSHQVQKTDVLVENDRITQIQPEINVEAEQIIDVKNQLLMPGLVDIHVHFRDPGQTDKEDVVSGSAAAVKGGFTTVLTMPNVDPVPDTPEKMTAMVKHNQTAGSLHIGQYGSITKKRTSEELVDFKALKEAGAVAFSNDGNGIQTAETMYQAMLQIKEVGLPLAAHVEDESLMQHGVMNQGTVAEKLGLPGISELAETAQLARDLEIARNTGAHYHVCHVSKARSVELIRRAQRDGVHVTAEVAPHHLFLDETMISMDNPMMKMNPPLRTLEDRQALLGGLLDGTIGMIATDHAPHTVKDKAGSMKTASFGITGLETAFPLLYTKLVKPGLCTVEQLVEWMSIQPAEIFNLKAAGQLEVGDVADLTVMNVEDEYEIKEADFASKGINSPFIGQKVYGQTQLTMVAGKIVYQREG.

The Zn(2+) site is built by histidine 58 and histidine 60. Residues 60–62 (HFR) and asparagine 92 contribute to the substrate site. The Zn(2+) site is built by aspartate 150, histidine 177, and histidine 230. Residue asparagine 276 coordinates substrate. Residue aspartate 303 coordinates Zn(2+). Aspartate 303 is an active-site residue. Substrate contacts are provided by residues histidine 307 and 321–322 (FG).

It belongs to the metallo-dependent hydrolases superfamily. DHOase family. Class I DHOase subfamily. Zn(2+) serves as cofactor.

The enzyme catalyses (S)-dihydroorotate + H2O = N-carbamoyl-L-aspartate + H(+). The protein operates within pyrimidine metabolism; UMP biosynthesis via de novo pathway; (S)-dihydroorotate from bicarbonate: step 3/3. Its function is as follows. Catalyzes the reversible cyclization of carbamoyl aspartate to dihydroorotate. This Pediococcus pentosaceus (strain ATCC 25745 / CCUG 21536 / LMG 10740 / 183-1w) protein is Dihydroorotase.